The following is an 88-amino-acid chain: Large ribosomal subunit protein bL27 (88 aa).

A disordered region spans residues 1–21 (MAHKKGQGSTQNNRDSAGRRL).

This sequence belongs to the bacterial ribosomal protein bL27 family.

In Helicobacter pylori (strain P12), this protein is Large ribosomal subunit protein bL27.